We begin with the raw amino-acid sequence, 271 residues long: Sulfur carrier protein adenylyltransferase (271 aa).

ATP contacts are provided by residues R13, G40, E61, R72, K85, L109, and 129–133 (DNFPT). C175 and C178 together coordinate Zn(2+). Residue C192 forms a Glycyl cysteine thioester (Cys-Gly) (interchain with G-Cter in TtuB) linkage. Zn(2+) is bound by residues C249 and C252.

Belongs to the HesA/MoeB/ThiF family. The cofactor is Zn(2+). Conjugated to TtuB via a covalent linkage that likely involves a lysine residue. Is able to form a covalent thioester adduct with TtuB via Cys-192 in vitro.

The enzyme catalyses [molybdopterin-synthase sulfur-carrier protein]-C-terminal Gly-Gly + ATP + H(+) = [molybdopterin-synthase sulfur-carrier protein]-C-terminal Gly-Gly-AMP + diphosphate. It catalyses the reaction [ThiS sulfur-carrier protein]-C-terminal Gly-Gly + ATP + H(+) = [ThiS sulfur-carrier protein]-C-terminal Gly-Gly-AMP + diphosphate. It carries out the reaction [TtuB sulfur-carrier protein]-C-terminal Gly-Gly + ATP + H(+) = [TtuB sulfur-carrier protein]-C-terminal Gly-Gly-AMP + diphosphate. Its pathway is tRNA modification. It participates in cofactor biosynthesis; thiamine diphosphate biosynthesis. It functions in the pathway cofactor biosynthesis; molybdopterin biosynthesis. With respect to regulation, enzymatic activity may be regulated by TtuB conjugation. Adenylyltransferase involved in the biosynthesis of several sulfur compounds. Is required for the 2-thiolation of 5-methyluridine residue at position 54 in the T loop of tRNAs, leading to 5-methyl-2-thiouridine (m(5)s(2)U or s(2)T). This modification allows thermal stabilization of tRNAs in thermophilic microorganisms, and is essential for cell growth at high temperatures. TtuC catalyzes the adenylation by ATP of the carboxyl group of the C-terminal glycine of sulfur carrier protein TtuB. Is also involved in the biosynthesis of thiamine, molybdenum cofactor (Moco) and probably tungsten cofactor (Wco), by adenylating the sulfur carriers ThiS and MoaD. Is required for the conjugation of TtuB to target proteins. This chain is Sulfur carrier protein adenylyltransferase, found in Thermus thermophilus (strain ATCC BAA-163 / DSM 7039 / HB27).